Here is an 846-residue protein sequence, read N- to C-terminus: Matrin-3 (846 aa).

An N-acetylserine modification is found at Ser2. At Lys3 the chain carries N6-acetyllysine; alternate. Lys3 participates in a covalent cross-link: Glycyl lysine isopeptide (Lys-Gly) (interchain with G-Cter in SUMO2); alternate. Residues Ser4, Ser9, Ser14, Ser22, Ser41, Ser118, and Ser126 each carry the phosphoserine modification. Residues Lys132 and Lys146 each participate in a glycyl lysine isopeptide (Lys-Gly) (interchain with G-Cter in SUMO2) cross-link. Disordered regions lie at residues 147–174 (RRRT…YRVP) and 187–213 (DSFD…ESGY). Thr150 carries the post-translational modification Phosphothreonine. The residue at position 157 (Ser157) is a Phosphoserine. Tyr158 is modified (phosphotyrosine). The segment covering 160–174 (RDGRSATREPPYRVP) has biased composition (basic and acidic residues). Ser164, Ser188, and Ser195 each carry phosphoserine. Basic and acidic residues predominate over residues 201 to 213 (DYDHGSRSQESGY). A Phosphotyrosine modification is found at Tyr202. 3 positions are modified to phosphoserine: Ser206, Ser208, and Ser211. At Tyr219 the chain carries Phosphotyrosine. Ser234 carries the phosphoserine modification. Lys245 participates in a covalent cross-link: Glycyl lysine isopeptide (Lys-Gly) (interchain with G-Cter in SUMO2). Residue Ser264 is modified to Phosphoserine. Lys269 is covalently cross-linked (Glycyl lysine isopeptide (Lys-Gly) (interchain with G-Cter in SUMO2)). Ser275 is subject to Phosphoserine. The tract at residues 342–394 (PFMLQQSTNPAPGILGPPPPSFHLGGPAVGPRGNLGAGNGNLQGPRHMQKGRV) is disordered. The RRM 1 domain maps to 398–473 (RVVHIMDFQR…KPVRVHLSQK (76 aa)). Glycyl lysine isopeptide (Lys-Gly) (interchain with G-Cter in SUMO2) cross-links involve residues Lys478, Lys487, and Lys491. Positions 496-571 (RVIHLSNLPH…RCVKVDLSEK (76 aa)) constitute an RRM 2 domain. A phosphoserine mark is found at Ser509 and Ser511. A Glycyl lysine isopeptide (Lys-Gly) (interchain with G-Cter in SUMO2) cross-link involves residue Lys515. Lys522 carries the N6-acetyllysine; alternate modification. Lys522 is covalently cross-linked (Glycyl lysine isopeptide (Lys-Gly) (interchain with G-Cter in SUMO2); alternate). The residue at position 533 (Ser533) is a Phosphoserine. Glycyl lysine isopeptide (Lys-Gly) (interchain with G-Cter in SUMO2) cross-links involve residues Lys554 and Lys555. Lys571 is modified (N6-acetyllysine). Positions 588 to 779 (KKDKSRKRSY…EDYTIPDEYR (192 aa)) are disordered. Residues Ser596, Ser598, Ser604, and Ser606 each carry the phosphoserine modification. Positions 600–642 (DGKESPSDKKSKTDAQKTESPAEGKEQEEKSGEDGEKDTKDDQ) are enriched in basic and acidic residues. Glycyl lysine isopeptide (Lys-Gly) (interchain with G-Cter in SUMO2) cross-links involve residues Lys616 and Lys629. Residues 652–664 (ESEDELLVDEEEA) are compositionally biased toward acidic residues. Phosphoserine is present on residues Ser653, Ser670, Ser672, and Ser673. Over residues 665 to 675 (AALLESGSSVG) the composition is skewed to low complexity. Thr678 bears the Phosphothreonine mark. Ser688 carries the post-translational modification Phosphoserine. A compositionally biased stretch (basic and acidic residues) spans 688-703 (SDGKKEPSDKAVKKDP). The Nuclear localization signal signature appears at 709–717 (SKKKLKKVD). Residues Lys718 and Lys735 each participate in a glycyl lysine isopeptide (Lys-Gly) (interchain with G-Cter in SUMO2) cross-link. Phosphothreonine is present on Thr740. Ser746 and Ser758 each carry phosphoserine. A compositionally biased stretch (basic and acidic residues) spans 766–779 (DENKEDYTIPDEYR). Residue Lys769 forms a Glycyl lysine isopeptide (Lys-Gly) (interchain with G-Cter in SUMO2) linkage. The Matrin-type zinc-finger motif lies at 800–831 (FYCKLCSLFYTNEEVAKNTHCSSLPHYQKLKK). The residue at position 835 (Lys835) is an N6-acetyllysine; alternate. Lys835 participates in a covalent cross-link: Glycyl lysine isopeptide (Lys-Gly) (interchain with G-Cter in SUMO2); alternate.

As to quaternary structure, part of a complex consisting of SFPQ, NONO and MATR3. Interacts with AGO1 and AGO2. Part of a complex composed at least of ASH2L, EMSY, HCFC1, HSPA8, CCAR2, MATR3, MKI67, RBBP5, TUBB2A, WDR5 and ZNF335; this complex may have a histone H3-specific methyltransferase activity. Interacts with TARDBP. Part of the HDP-RNP complex composed of at least HEXIM1, PRKDC, XRCC5, XRCC6, paraspeckle proteins (SFPQ, NONO, PSPC1, RBM14, and MATR3) and NEAT1 RNA. Interacts with FUS. Interacts with IGF2BP1. Interacts with IGF2BP2 and IGF2BP3. Interacts with RBPMS.

The protein localises to the nucleus matrix. Functionally, may play a role in transcription or may interact with other nuclear matrix proteins to form the internal fibrogranular network. In association with the SFPQ-NONO heteromer may play a role in nuclear retention of defective RNAs. Plays a role in the regulation of DNA virus-mediated innate immune response by assembling into the HDP-RNP complex, a complex that serves as a platform for IRF3 phosphorylation and subsequent innate immune response activation through the cGAS-STING pathway. Binds to N6-methyladenosine (m6A)-containing mRNAs and contributes to MYC stability by binding to m6A-containing MYC mRNAs. May bind to specific miRNA hairpins. The chain is Matrin-3 (Matr3) from Mus musculus (Mouse).